Reading from the N-terminus, the 291-residue chain is 3-hydroxy-5-phosphonooxypentane-2,4-dione thiolase (291 aa).

The Schiff-base intermediate with substrate role is filled by K203.

The protein belongs to the DeoC/FbaB aldolase family. Homodecamer.

It is found in the cytoplasm. The enzyme catalyses dihydroxyacetone phosphate + acetyl-CoA = 3-hydroxy-2,4-dioxopentyl phosphate + CoA. Functionally, involved in the degradation of phospho-AI-2, thereby terminating induction of the lsr operon and closing the AI-2 signaling cycle. Catalyzes the transfer of an acetyl moiety from 3-hydroxy-5-phosphonooxypentane-2,4-dione to CoA to form glycerone phosphate and acetyl-CoA. The polypeptide is 3-hydroxy-5-phosphonooxypentane-2,4-dione thiolase (Photorhabdus laumondii subsp. laumondii (strain DSM 15139 / CIP 105565 / TT01) (Photorhabdus luminescens subsp. laumondii)).